Reading from the N-terminus, the 388-residue chain is Succinate--CoA ligase [ADP-forming] subunit beta (388 aa).

Residues 9–244 (KQLFARYGLP…PSQEDSREAH (236 aa)) enclose the ATP-grasp domain. ATP-binding positions include K46, 53 to 55 (GRG), E99, T102, and E107. The Mg(2+) site is built by N199 and D213. Residues N264 and 321 to 323 (GIV) contribute to the substrate site.

This sequence belongs to the succinate/malate CoA ligase beta subunit family. As to quaternary structure, heterotetramer of two alpha and two beta subunits. Mg(2+) is required as a cofactor.

The catalysed reaction is succinate + ATP + CoA = succinyl-CoA + ADP + phosphate. It catalyses the reaction GTP + succinate + CoA = succinyl-CoA + GDP + phosphate. The protein operates within carbohydrate metabolism; tricarboxylic acid cycle; succinate from succinyl-CoA (ligase route): step 1/1. In terms of biological role, succinyl-CoA synthetase functions in the citric acid cycle (TCA), coupling the hydrolysis of succinyl-CoA to the synthesis of either ATP or GTP and thus represents the only step of substrate-level phosphorylation in the TCA. The beta subunit provides nucleotide specificity of the enzyme and binds the substrate succinate, while the binding sites for coenzyme A and phosphate are found in the alpha subunit. This chain is Succinate--CoA ligase [ADP-forming] subunit beta, found in Pectobacterium atrosepticum (strain SCRI 1043 / ATCC BAA-672) (Erwinia carotovora subsp. atroseptica).